A 415-amino-acid chain; its full sequence is ATP-dependent RNA helicase RhlB (415 aa).

The Q motif motif lies at 9 to 37 (QRFSALPLHPIVRGALAKKGFDFCTPIQA). Residues 40–218 (LPISLNGRDV…FEDMNEPEYI (179 aa)) form the Helicase ATP-binding domain. 53–60 (AQTGTGKT) contacts ATP. Residues 164–167 (DEAD) carry the DEAD box motif. Residues 241–389 (DKMALLLTLM…VSQYETEALL (149 aa)) enclose the Helicase C-terminal domain.

It belongs to the DEAD box helicase family. RhlB subfamily. In terms of assembly, component of the RNA degradosome, which is a multiprotein complex involved in RNA processing and mRNA degradation.

The protein resides in the cytoplasm. It carries out the reaction ATP + H2O = ADP + phosphate + H(+). In terms of biological role, DEAD-box RNA helicase involved in RNA degradation. Has RNA-dependent ATPase activity and unwinds double-stranded RNA. The chain is ATP-dependent RNA helicase RhlB from Haemophilus influenzae (strain ATCC 51907 / DSM 11121 / KW20 / Rd).